A 302-amino-acid polypeptide reads, in one-letter code: MKTGSEFHVGIVGLGSMGMGAALSCVRAGLSTWGADLNSNACATLKEAGACGVSDNAATFAEKLDALLVLVVNATQVKQVLFGEKGVAQHLKPGTAVMVSSTIASADAQEIATALAGFGLEMLDAPVSGGAVKAANGEMTVMASGSDIAFERLAPVLEAVAGKVYRIGSEPGLGSTVKIIHQLLAGVHIAAGAEAMALAARAGIPLDVMYDVVTNAAGNSWMFENRMRHVVDGDYTPHSAVDIFVKDLGLVADTAKALHFPLPLASTALNMFTSASNAGYGKEDDSAVIKIFSGITLPGAKS.

Residues 7 to 35 and threonine 102 contribute to the NAD(+) site; that span reads FHVG…TWGA. Lysine 178 is an active-site residue. Position 246 (lysine 246) interacts with NAD(+).

The protein belongs to the HIBADH-related family. L-threonate dehydrogenase subfamily.

It carries out the reaction L-threonate + NAD(+) = 2-dehydro-L-erythronate + NADH + H(+). In terms of biological role, catalyzes oxidation of L-threonate to 2-oxo-tetronate. Can use either NAD(+) or NADP(+) as cosubstrate, with a preference for NAD(+). The protein is L-threonate dehydrogenase of Escherichia coli O6:H1 (strain CFT073 / ATCC 700928 / UPEC).